A 349-amino-acid polypeptide reads, in one-letter code: tRNA pseudouridine synthase D (349 aa).

Residue F27 participates in substrate binding. Catalysis depends on D80, which acts as the Nucleophile. Position 129 (N129) interacts with substrate. Positions 155-303 (GVPNYFGAQR…VEAARRAMLL (149 aa)) constitute a TRUD domain. Residue F329 participates in substrate binding.

The protein belongs to the pseudouridine synthase TruD family.

It catalyses the reaction uridine(13) in tRNA = pseudouridine(13) in tRNA. Responsible for synthesis of pseudouridine from uracil-13 in transfer RNAs. This chain is tRNA pseudouridine synthase D, found in Shigella dysenteriae serotype 1 (strain Sd197).